Here is a 159-residue protein sequence, read N- to C-terminus: 2-C-methyl-D-erythritol 2,4-cyclodiphosphate synthase (159 aa).

D8 and H10 together coordinate a divalent metal cation. 4-CDP-2-C-methyl-D-erythritol 2-phosphate is bound by residues 8-10 (DVH) and 34-35 (HS). H42 contributes to the a divalent metal cation binding site. 4-CDP-2-C-methyl-D-erythritol 2-phosphate is bound by residues 56–58 (DIG), 61–65 (FPDTD), 132–135 (TTTE), F139, and R142.

It belongs to the IspF family. In terms of assembly, homotrimer. The cofactor is a divalent metal cation.

The catalysed reaction is 4-CDP-2-C-methyl-D-erythritol 2-phosphate = 2-C-methyl-D-erythritol 2,4-cyclic diphosphate + CMP. It functions in the pathway isoprenoid biosynthesis; isopentenyl diphosphate biosynthesis via DXP pathway; isopentenyl diphosphate from 1-deoxy-D-xylulose 5-phosphate: step 4/6. Its function is as follows. Involved in the biosynthesis of isopentenyl diphosphate (IPP) and dimethylallyl diphosphate (DMAPP), two major building blocks of isoprenoid compounds. Catalyzes the conversion of 4-diphosphocytidyl-2-C-methyl-D-erythritol 2-phosphate (CDP-ME2P) to 2-C-methyl-D-erythritol 2,4-cyclodiphosphate (ME-CPP) with a corresponding release of cytidine 5-monophosphate (CMP). The polypeptide is 2-C-methyl-D-erythritol 2,4-cyclodiphosphate synthase (Finegoldia magna (strain ATCC 29328 / DSM 20472 / WAL 2508) (Peptostreptococcus magnus)).